We begin with the raw amino-acid sequence, 209 residues long: Uracil phosphoribosyltransferase (209 aa).

5-phospho-alpha-D-ribose 1-diphosphate is bound by residues Arg-79, Arg-104, and 131–139; that span reads DPMLATGAS. Residues Ile-194 and 199–201 contribute to the uracil site; that span reads GDA. Asp-200 contacts 5-phospho-alpha-D-ribose 1-diphosphate.

The protein belongs to the UPRTase family. Mg(2+) serves as cofactor.

The catalysed reaction is UMP + diphosphate = 5-phospho-alpha-D-ribose 1-diphosphate + uracil. The protein operates within pyrimidine metabolism; UMP biosynthesis via salvage pathway; UMP from uracil: step 1/1. With respect to regulation, allosterically activated by GTP. In terms of biological role, catalyzes the conversion of uracil and 5-phospho-alpha-D-ribose 1-diphosphate (PRPP) to UMP and diphosphate. This chain is Uracil phosphoribosyltransferase, found in Staphylococcus carnosus (strain TM300).